Here is a 262-residue protein sequence, read N- to C-terminus: Thrombin-like enzyme gyroxin B1.4 (262 aa).

An N-terminal signal peptide occupies residues 1–18 (MVLIRVLANLLILQLSYA). The propeptide occupies 19-262 (QKSSELVIGG…AGNTIVNCPP (244 aa)). One can recognise a Peptidase S1 domain in the interval 25 to 253 (VIGGDECNIN…HLDWIQSIIA (229 aa)). Disulfide bonds link Cys31/Cys165, Cys52/Cys68, Cys102/Cys260, Cys144/Cys214, Cys176/Cys193, and Cys204/Cys229. His67 (charge relay system) is an active-site residue. Residue Asn105 is glycosylated (N-linked (GlcNAc...) asparagine). Residue Asp112 is the Charge relay system of the active site. Ser208 functions as the Charge relay system in the catalytic mechanism.

Belongs to the peptidase S1 family. Snake venom subfamily. As to quaternary structure, monomer. In terms of tissue distribution, expressed by the venom gland.

The protein resides in the secreted. Thrombin-like snake venom serine protease. Displays a specificity similar to trypsin. Releases only fibrinopeptide A in the conversion of fibrinogen to fibrin. Shows coagulant, esterase and amidase activities. Reversibly increases the permeability of the blood brain barrier (BBB) in mice. Induces the barrel rotation syndrome in mice, which is manifested by gyroxin-like, rapid rolling motions. This syndrome may be due to its effect on BBB permeability, and certainly also to other actions affecting endogenous substrates present in the endothelium, nervous tissues or blood. The chain is Thrombin-like enzyme gyroxin B1.4 from Crotalus durissus terrificus (South American rattlesnake).